The primary structure comprises 107 residues: uncharacterized protein (107 aa).

A helical membrane pass occupies residues 9-31; it reads AAAIITAPTILAMMSTVLRALIF.

The protein resides in the membrane. This is an uncharacterized protein from Archaeoglobus fulgidus (strain ATCC 49558 / DSM 4304 / JCM 9628 / NBRC 100126 / VC-16).